A 388-amino-acid polypeptide reads, in one-letter code: S-adenosylmethionine synthase (388 aa).

H16 contacts ATP. Residue D18 participates in Mg(2+) binding. E44 lines the K(+) pocket. 2 residues coordinate L-methionine: E57 and Q100. Positions 100–110 are flexible loop; the sequence is QSPEIAQGVDR. ATP-binding positions include 165-167, D240, 246-247, A263, and K267; these read DAK and RK. D240 serves as a coordination point for L-methionine. K271 contributes to the L-methionine binding site.

It belongs to the AdoMet synthase family. In terms of assembly, homotetramer; dimer of dimers. Requires Mg(2+) as cofactor. K(+) serves as cofactor.

Its subcellular location is the cytoplasm. The enzyme catalyses L-methionine + ATP + H2O = S-adenosyl-L-methionine + phosphate + diphosphate. It participates in amino-acid biosynthesis; S-adenosyl-L-methionine biosynthesis; S-adenosyl-L-methionine from L-methionine: step 1/1. In terms of biological role, catalyzes the formation of S-adenosylmethionine (AdoMet) from methionine and ATP. The overall synthetic reaction is composed of two sequential steps, AdoMet formation and the subsequent tripolyphosphate hydrolysis which occurs prior to release of AdoMet from the enzyme. The sequence is that of S-adenosylmethionine synthase from Acinetobacter baumannii (strain AYE).